The following is a 78-amino-acid chain: Acyl carrier protein (78 aa).

In terms of domain architecture, Carrier spans 2 to 77 (SDSAEKVKKI…DAIDYIEANK (76 aa)). Serine 37 bears the O-(pantetheine 4'-phosphoryl)serine mark.

The protein belongs to the acyl carrier protein (ACP) family. 4'-phosphopantetheine is transferred from CoA to a specific serine of apo-ACP by AcpS. This modification is essential for activity because fatty acids are bound in thioester linkage to the sulfhydryl of the prosthetic group.

It localises to the cytoplasm. The protein operates within lipid metabolism; fatty acid biosynthesis. Carrier of the growing fatty acid chain in fatty acid biosynthesis. The polypeptide is Acyl carrier protein (Sphingopyxis alaskensis (strain DSM 13593 / LMG 18877 / RB2256) (Sphingomonas alaskensis)).